The sequence spans 106 residues: Urease subunit beta (106 aa).

Belongs to the urease beta subunit family. As to quaternary structure, heterotrimer of UreA (gamma), UreB (beta) and UreC (alpha) subunits. Three heterotrimers associate to form the active enzyme.

Its subcellular location is the cytoplasm. It catalyses the reaction urea + 2 H2O + H(+) = hydrogencarbonate + 2 NH4(+). It functions in the pathway nitrogen metabolism; urea degradation; CO(2) and NH(3) from urea (urease route): step 1/1. The sequence is that of Urease subunit beta from Synechococcus sp. (strain CC9902).